The chain runs to 485 residues: Cysteine--tRNA ligase (485 aa).

C29 serves as a coordination point for Zn(2+). Residues 31 to 41 carry the 'HIGH' region motif; sequence VTVYDHCHIGH. Residues C209, H234, and E238 each contribute to the Zn(2+) site. Positions 266–270 match the 'KMSKS' region motif; sequence KMSKS. K269 contributes to the ATP binding site.

It belongs to the class-I aminoacyl-tRNA synthetase family. As to quaternary structure, monomer. The cofactor is Zn(2+).

It localises to the cytoplasm. The enzyme catalyses tRNA(Cys) + L-cysteine + ATP = L-cysteinyl-tRNA(Cys) + AMP + diphosphate. This chain is Cysteine--tRNA ligase, found in Geobacter metallireducens (strain ATCC 53774 / DSM 7210 / GS-15).